Consider the following 328-residue polypeptide: Nucleotide-binding protein BL0705 (328 aa).

Residues 1 to 35 are disordered; the sequence is MNQQTTNRDTGEAAATNAPANSATSTSTPDNQPTP. Residues 13 to 29 show a composition bias toward low complexity; sequence AAATNAPANSATSTSTP. 46–53 provides a ligand contact to ATP; the sequence is GMSGAGRS. 101 to 104 lines the GTP pocket; that stretch reads DVRS.

This sequence belongs to the RapZ-like family.

Functionally, displays ATPase and GTPase activities. The sequence is that of Nucleotide-binding protein BL0705 from Bifidobacterium longum (strain NCC 2705).